The chain runs to 120 residues: Ribosome-binding factor A (120 aa).

It belongs to the RbfA family. As to quaternary structure, monomer. Binds 30S ribosomal subunits, but not 50S ribosomal subunits or 70S ribosomes.

The protein localises to the cytoplasm. Functionally, one of several proteins that assist in the late maturation steps of the functional core of the 30S ribosomal subunit. Associates with free 30S ribosomal subunits (but not with 30S subunits that are part of 70S ribosomes or polysomes). Required for efficient processing of 16S rRNA. May interact with the 5'-terminal helix region of 16S rRNA. The sequence is that of Ribosome-binding factor A from Chlamydia pneumoniae (Chlamydophila pneumoniae).